A 184-amino-acid chain; its full sequence is Photosystem I assembly protein Ycf4 (184 aa).

2 consecutive transmembrane segments (helical) span residues 22–42 (FCWA…GTSS) and 57–77 (IIFF…LFIS).

This sequence belongs to the Ycf4 family.

It is found in the plastid. The protein resides in the chloroplast thylakoid membrane. Functionally, seems to be required for the assembly of the photosystem I complex. In Arabis hirsuta (Hairy rock-cress), this protein is Photosystem I assembly protein Ycf4.